The primary structure comprises 164 residues: Phosphopantetheine adenylyltransferase (164 aa).

Serine 10 provides a ligand contact to substrate. Residues 10-11 and histidine 18 each bind ATP; that span reads SF. Residues lysine 42, leucine 74, and arginine 88 each coordinate substrate. Residues 89–91, glutamate 99, and 124–130 each bind ATP; these read GLR and YSFLSSS.

Belongs to the bacterial CoaD family. As to quaternary structure, homohexamer. The cofactor is Mg(2+).

It is found in the cytoplasm. The enzyme catalyses (R)-4'-phosphopantetheine + ATP + H(+) = 3'-dephospho-CoA + diphosphate. It participates in cofactor biosynthesis; coenzyme A biosynthesis; CoA from (R)-pantothenate: step 4/5. Functionally, reversibly transfers an adenylyl group from ATP to 4'-phosphopantetheine, yielding dephospho-CoA (dPCoA) and pyrophosphate. The protein is Phosphopantetheine adenylyltransferase of Exiguobacterium sibiricum (strain DSM 17290 / CCUG 55495 / CIP 109462 / JCM 13490 / 255-15).